Consider the following 191-residue polypeptide: Protein GrpE (191 aa).

Positions 1–49 (MSEEKQTAEQVEAAEQEEVTEQAEQAASQEQHEETAGQEEALQHQIDEL) are disordered. A compositionally biased stretch (acidic residues) spans 12 to 21 (EAAEQEEVTE). A compositionally biased stretch (basic and acidic residues) spans 30 to 49 (EQHEETAGQEEALQHQIDEL).

It belongs to the GrpE family. As to quaternary structure, homodimer.

The protein localises to the cytoplasm. In terms of biological role, participates actively in the response to hyperosmotic and heat shock by preventing the aggregation of stress-denatured proteins, in association with DnaK and GrpE. It is the nucleotide exchange factor for DnaK and may function as a thermosensor. Unfolded proteins bind initially to DnaJ; upon interaction with the DnaJ-bound protein, DnaK hydrolyzes its bound ATP, resulting in the formation of a stable complex. GrpE releases ADP from DnaK; ATP binding to DnaK triggers the release of the substrate protein, thus completing the reaction cycle. Several rounds of ATP-dependent interactions between DnaJ, DnaK and GrpE are required for fully efficient folding. This chain is Protein GrpE, found in Bacillus velezensis (strain DSM 23117 / BGSC 10A6 / LMG 26770 / FZB42) (Bacillus amyloliquefaciens subsp. plantarum).